The following is a 255-amino-acid chain: D-aminoacyl-tRNA deacylase (255 aa).

This sequence belongs to the DtdA deacylase family. As to quaternary structure, monomer. Requires Zn(2+) as cofactor.

It catalyses the reaction a D-aminoacyl-tRNA + H2O = a tRNA + a D-alpha-amino acid + H(+). The catalysed reaction is glycyl-tRNA(Ala) + H2O = tRNA(Ala) + glycine + H(+). D-aminoacyl-tRNA deacylase with broad substrate specificity. By recycling D-aminoacyl-tRNA to D-amino acids and free tRNA molecules, this enzyme counteracts the toxicity associated with the formation of D-aminoacyl-tRNA entities in vivo. The protein is D-aminoacyl-tRNA deacylase of Methanocaldococcus jannaschii (strain ATCC 43067 / DSM 2661 / JAL-1 / JCM 10045 / NBRC 100440) (Methanococcus jannaschii).